Consider the following 144-residue polypeptide: Large ribosomal subunit protein uL11 (144 aa).

This sequence belongs to the universal ribosomal protein uL11 family. Part of the ribosomal stalk of the 50S ribosomal subunit. Interacts with L10 and the large rRNA to form the base of the stalk. L10 forms an elongated spine to which L12 dimers bind in a sequential fashion forming a multimeric L10(L12)X complex. One or more lysine residues are methylated.

Forms part of the ribosomal stalk which helps the ribosome interact with GTP-bound translation factors. This is Large ribosomal subunit protein uL11 from Streptomyces avermitilis (strain ATCC 31267 / DSM 46492 / JCM 5070 / NBRC 14893 / NCIMB 12804 / NRRL 8165 / MA-4680).